The sequence spans 85 residues: Large ribosomal subunit protein bL27 (85 aa).

Residues 1 to 21 (MAHKKAGGSTRNGRDSNAQRL) are disordered. A compositionally biased stretch (polar residues) spans 9-19 (STRNGRDSNAQ).

This sequence belongs to the bacterial ribosomal protein bL27 family.

The polypeptide is Large ribosomal subunit protein bL27 (Pectobacterium carotovorum subsp. carotovorum (strain PC1)).